Here is a 354-residue protein sequence, read N- to C-terminus: UPF0283 membrane protein plu2581 (354 aa).

3 helical membrane passes run 71–91 (MVYG…VQWI), 101–121 (SALG…GSLV), and 214–234 (ESAL…FIAW).

It belongs to the UPF0283 family.

Its subcellular location is the cell inner membrane. In Photorhabdus laumondii subsp. laumondii (strain DSM 15139 / CIP 105565 / TT01) (Photorhabdus luminescens subsp. laumondii), this protein is UPF0283 membrane protein plu2581.